The chain runs to 370 residues: Glutamate 5-kinase (370 aa).

Lys-17 serves as a coordination point for ATP. Substrate contacts are provided by Ser-56, Asp-143, and Asn-155. 175–176 (SD) contacts ATP. Residues 280–357 (KGEITVDAGA…DEIEGILGYP (78 aa)) form the PUA domain.

This sequence belongs to the glutamate 5-kinase family.

The protein localises to the cytoplasm. It catalyses the reaction L-glutamate + ATP = L-glutamyl 5-phosphate + ADP. Its pathway is amino-acid biosynthesis; L-proline biosynthesis; L-glutamate 5-semialdehyde from L-glutamate: step 1/2. Functionally, catalyzes the transfer of a phosphate group to glutamate to form L-glutamate 5-phosphate. The polypeptide is Glutamate 5-kinase (Paracoccus denitrificans (strain Pd 1222)).